The chain runs to 240 residues: UDP-2,3-diacylglucosamine hydrolase (240 aa).

Mn(2+)-binding residues include D8, H10, D41, N79, and H114. 79 to 80 (NR) is a binding site for substrate. The substrate site is built by D122, S160, N164, K167, and H195. Mn(2+) is bound by residues H195 and H197.

The protein belongs to the LpxH family. Mn(2+) serves as cofactor.

The protein resides in the cell inner membrane. The catalysed reaction is UDP-2-N,3-O-bis[(3R)-3-hydroxytetradecanoyl]-alpha-D-glucosamine + H2O = 2-N,3-O-bis[(3R)-3-hydroxytetradecanoyl]-alpha-D-glucosaminyl 1-phosphate + UMP + 2 H(+). It participates in glycolipid biosynthesis; lipid IV(A) biosynthesis; lipid IV(A) from (3R)-3-hydroxytetradecanoyl-[acyl-carrier-protein] and UDP-N-acetyl-alpha-D-glucosamine: step 4/6. Hydrolyzes the pyrophosphate bond of UDP-2,3-diacylglucosamine to yield 2,3-diacylglucosamine 1-phosphate (lipid X) and UMP by catalyzing the attack of water at the alpha-P atom. Involved in the biosynthesis of lipid A, a phosphorylated glycolipid that anchors the lipopolysaccharide to the outer membrane of the cell. This chain is UDP-2,3-diacylglucosamine hydrolase, found in Yersinia pseudotuberculosis serotype O:1b (strain IP 31758).